The primary structure comprises 446 residues: Tubulin beta chain (446 aa).

GTP is bound by residues Q11, E69, S138, G142, T143, G144, N204, and N226. E69 is a Mg(2+) binding site. A disordered region spans residues 423–446; the sequence is QQYQDATADEEEGEYEEEPAEEEQ. The span at 429-446 shows a compositional bias: acidic residues; it reads TADEEEGEYEEEPAEEEQ.

Belongs to the tubulin family. In terms of assembly, dimer of alpha and beta chains. A typical microtubule is a hollow water-filled tube with an outer diameter of 25 nm and an inner diameter of 15 nM. Alpha-beta heterodimers associate head-to-tail to form protofilaments running lengthwise along the microtubule wall with the beta-tubulin subunit facing the microtubule plus end conferring a structural polarity. Microtubules usually have 13 protofilaments but different protofilament numbers can be found in some organisms and specialized cells. The cofactor is Mg(2+).

It localises to the cytoplasm. The protein localises to the cytoskeleton. Its function is as follows. Tubulin is the major constituent of microtubules, a cylinder consisting of laterally associated linear protofilaments composed of alpha- and beta-tubulin heterodimers. Microtubules grow by the addition of GTP-tubulin dimers to the microtubule end, where a stabilizing cap forms. Below the cap, tubulin dimers are in GDP-bound state, owing to GTPase activity of alpha-tubulin. The chain is Tubulin beta chain from Pleurotus sajor-caju (Oyster mushroom).